The chain runs to 366 residues: Sulfate/thiosulfate import ATP-binding protein CysA 2 (366 aa).

In terms of domain architecture, ABC transporter spans 14–243 (LSVHALCRRF…PASRFVAEFV (230 aa)). 46–53 (GPSGCGKT) provides a ligand contact to ATP.

It belongs to the ABC transporter superfamily. Sulfate/tungstate importer (TC 3.A.1.6) family. The complex is composed of two ATP-binding proteins (CysA), two transmembrane proteins (CysT and CysW) and a solute-binding protein (CysP).

The protein localises to the cell inner membrane. It carries out the reaction sulfate(out) + ATP + H2O = sulfate(in) + ADP + phosphate + H(+). It catalyses the reaction thiosulfate(out) + ATP + H2O = thiosulfate(in) + ADP + phosphate + H(+). Part of the ABC transporter complex CysAWTP involved in sulfate/thiosulfate import. Responsible for energy coupling to the transport system. This is Sulfate/thiosulfate import ATP-binding protein CysA 2 from Chromobacterium violaceum (strain ATCC 12472 / DSM 30191 / JCM 1249 / CCUG 213 / NBRC 12614 / NCIMB 9131 / NCTC 9757 / MK).